The primary structure comprises 401 residues: uncharacterized protein (401 aa).

This sequence belongs to the serpin family.

Its function is as follows. May act as an inhibitor for a host chymotrypsin-like protease. This is an uncharacterized protein from Acanthamoeba polyphaga mimivirus (APMV).